A 428-amino-acid polypeptide reads, in one-letter code: C4-dicarboxylate transport protein (428 aa).

A run of 8 helical transmembrane segments spans residues 8–28 (VLYV…HYYP), 44–64 (LIKM…IAGM), 78–98 (LLYF…ATHI), 148–168 (GEIL…AHLG), 184–204 (VLFG…FGAM), 222–242 (LIGT…GAIA), 307–327 (IYMT…LTWM), and 355–375 (AATL…ILGI).

The protein belongs to the dicarboxylate/amino acid:cation symporter (DAACS) (TC 2.A.23) family.

It localises to the cell inner membrane. Its function is as follows. Responsible for the transport of dicarboxylates such as succinate, fumarate, and malate from the periplasm across the membrane. This is C4-dicarboxylate transport protein from Burkholderia mallei (strain ATCC 23344).